The following is a 259-amino-acid chain: uncharacterized protein (259 aa).

The signal sequence occupies residues 1-22 (MKHSSKIIVFVSFLILTIFIGG). A lipid anchor (N-palmitoyl cysteine) is attached at Cys-23. Cys-23 is lipidated: S-diacylglycerol cysteine.

This sequence belongs to the staphylococcal tandem lipoprotein family.

It is found in the cell membrane. This is an uncharacterized protein from Staphylococcus epidermidis (strain ATCC 35984 / DSM 28319 / BCRC 17069 / CCUG 31568 / BM 3577 / RP62A).